The primary structure comprises 60 residues: Large ribosomal subunit protein uL30 (60 aa).

The protein belongs to the universal ribosomal protein uL30 family. Part of the 50S ribosomal subunit.

The chain is Large ribosomal subunit protein uL30 from Albidiferax ferrireducens (strain ATCC BAA-621 / DSM 15236 / T118) (Rhodoferax ferrireducens).